The chain runs to 523 residues: Synaptotagmin-10 (523 aa).

Over 1-55 (MSFRKEDGVSSLCQKALHIITELCFAGQVEWDKCSGIFPADRSGQGGGGTDISVS) the chain is Vesicular. The segment at 13-35 (CQKALHIITELCFAGQVEWDKCS) is cysteine motif. A helical transmembrane segment spans residues 56 to 76 (LLAVVVSFCGLALLVVSLFVF). Over 77–523 (WKLCWPCWKS…CSSPRPPSTP (447 aa)) the chain is Cytoplasmic. Threonine 136 carries the phosphothreonine modification. 2 consecutive C2 domains span residues 231–352 (TCGK…TVWK) and 363–496 (DLGE…THWH). Ca(2+) contacts are provided by aspartate 262, aspartate 268, aspartate 320, phenylalanine 321, aspartate 322, serine 325, aspartate 328, aspartate 394, aspartate 400, aspartate 454, and aspartate 456.

The protein belongs to the synaptotagmin family. Homodimer; disulfide-linked via the cysteine motif. Can also form heterodimers with SYT3, SYT6, SYT7 and SYT9. Requires Ca(2+) as cofactor.

It is found in the cytoplasmic vesicle. The protein localises to the secretory vesicle membrane. In terms of biological role, ca(2+) sensor specifically required for the Ca(2+)-dependent exocytosis of secretory vesicles containing IGF1 in neurons of the olfactory bulb. Exocytosis of IGF1 is required for sensory perception of smell. Not involved in Ca(2+)-dependent synaptic vesicle exocytosis. Acts through Ca(2+) and phospholipid binding to the C2 domain: Ca(2+) induces binding of the C2-domains to phospholipid membranes and to assembled SNARE-complexes; both actions contribute to triggering exocytosis. The protein is Synaptotagmin-10 (Syt10) of Rattus norvegicus (Rat).